The following is a 218-amino-acid chain: Adenylate kinase (218 aa).

10 to 15 (GAGKGT) contributes to the ATP binding site. The tract at residues 30-59 (STGDMLRAAVKAQSELGMAAKKVMDEGGLV) is NMP. AMP is bound by residues Thr31, Arg36, 57–59 (GLV), 85–88 (GFPR), and Gln92. Residues 122 to 159 (GRRVHPASGRTYHIVFNPPAVEGKDDVTGEDLVQRDDD) form an LID region. ATP is bound by residues Arg123 and 132–133 (TY). 2 residues coordinate AMP: Arg156 and Arg167. Gly203 contributes to the ATP binding site.

The protein belongs to the adenylate kinase family. As to quaternary structure, monomer.

The protein localises to the cytoplasm. The catalysed reaction is AMP + ATP = 2 ADP. It participates in purine metabolism; AMP biosynthesis via salvage pathway; AMP from ADP: step 1/1. In terms of biological role, catalyzes the reversible transfer of the terminal phosphate group between ATP and AMP. Plays an important role in cellular energy homeostasis and in adenine nucleotide metabolism. The chain is Adenylate kinase from Chlorobaculum parvum (strain DSM 263 / NCIMB 8327) (Chlorobium vibrioforme subsp. thiosulfatophilum).